Reading from the N-terminus, the 340-residue chain is Lysophospholipase L2 (340 aa).

Its subcellular location is the cell inner membrane. It carries out the reaction a 1-acyl-sn-glycero-3-phosphocholine + H2O = sn-glycerol 3-phosphocholine + a fatty acid + H(+). The polypeptide is Lysophospholipase L2 (pldB) (Escherichia coli O6:H1 (strain CFT073 / ATCC 700928 / UPEC)).